The chain runs to 517 residues: 2-isopropylmalate synthase (517 aa).

Residues 7 to 269 enclose the Pyruvate carboxyltransferase domain; it reads VIIFDTTLRD…ETGIDTTQIV (263 aa). Mn(2+) contacts are provided by D16, H204, H206, and N240. Residues 366-517 are required for the condensation reaction. Not required to bind substrate; it reads LADKKREIFD…KPKAQGSGTI (152 aa). Residues 395 to 517 are regulatory domain; sequence KFISQKISTE…KPKAQGSGTI (123 aa).

This sequence belongs to the alpha-IPM synthase/homocitrate synthase family. LeuA type 1 subfamily. As to quaternary structure, homodimer. Remains a homodimer in the presence of L-leucine. The cofactor is Mn(2+).

The protein localises to the cytoplasm. It carries out the reaction 3-methyl-2-oxobutanoate + acetyl-CoA + H2O = (2S)-2-isopropylmalate + CoA + H(+). The protein operates within amino-acid biosynthesis; L-leucine biosynthesis; L-leucine from 3-methyl-2-oxobutanoate: step 1/4. Inhibited by 3-bromo substituents and Leu, the pathway end product. Functionally, catalyzes the condensation of the acetyl group of acetyl-CoA with 3-methyl-2-oxobutanoate (2-ketoisovalerate) to form 3-carboxy-3-hydroxy-4-methylpentanoate (2-isopropylmalate). Complements an E.coli deletion. The polypeptide is 2-isopropylmalate synthase (Neisseria meningitidis serogroup B (strain ATCC BAA-335 / MC58)).